Consider the following 377-residue polypeptide: MLGKVERSEMYILFAMTQVLLVDKISGITSHTAVAKIRHLTGIKKIGHCGTLDPAACGLLIMGCGTATRLIRYMSNLDKRYIATITLGTQTTTDDSEGEIIYSAPKPSLDKITLESIGRAAEKLSGTIKQIPSAYSAIKVSGNRAYNLARQGIIPKLNAREVRVHWKFLGDFENNQVHVQITCSSGTYVRALARDMGKFLGVGGHLSYLKRLSIGPFHLHEIYREINKKEATMSERTPSGNTQGLTDNMAISESDKHDCTEPGINCTELGIKDTCTALREVHYTQGDTLSFTRLTALQALSRIYKPIEVSQKQADDLSCGRYISLGIDSKGPVCAVCKENLIAVIQPVSAGLWRPETVLSDNRKLNSNAAQDASGST.

Residue Asp53 is the Nucleophile of the active site.

This sequence belongs to the pseudouridine synthase TruB family. Type 1 subfamily.

It carries out the reaction uridine(55) in tRNA = pseudouridine(55) in tRNA. Its function is as follows. Responsible for synthesis of pseudouridine from uracil-55 in the psi GC loop of transfer RNAs. In Tropheryma whipplei (strain Twist) (Whipple's bacillus), this protein is tRNA pseudouridine synthase B.